A 142-amino-acid polypeptide reads, in one-letter code: Large ribosomal subunit protein uL13 (142 aa).

It belongs to the universal ribosomal protein uL13 family. Part of the 50S ribosomal subunit.

Functionally, this protein is one of the early assembly proteins of the 50S ribosomal subunit, although it is not seen to bind rRNA by itself. It is important during the early stages of 50S assembly. The polypeptide is Large ribosomal subunit protein uL13 (Pseudomonas putida (strain ATCC 700007 / DSM 6899 / JCM 31910 / BCRC 17059 / LMG 24140 / F1)).